A 294-amino-acid chain; its full sequence is MTDTLNLVVITGMSGAGKTVAMQSFEDLGYFCVDNMPPSLLPKFWELVKESGKVTKIALVIDLRSRAFYDGIIEMLSGLDNTQFVTTKILFLDASDEELVSRYKETRRSHPLARNGRLMDGIHKERELLTEIRNQSQMVVNTSMLSPRELREQIFRVFKTSDNPSFHIEVMSFGFKYGLPIDADIVMDVRFLPNPYYVAEFKALNGLDKPVRDYVMEQPATEKFYQQLTALLKSIMPGYLKEGKTSVTIAIGCTGGQHRSVALAQRLADDLAVDYPVDVTHRDMKKRKESVNRS.

12–19 (GMSGAGKT) contacts ATP. 62–65 (DLRS) serves as a coordination point for GTP.

It belongs to the RapZ-like family.

Displays ATPase and GTPase activities. The polypeptide is Nucleotide-binding protein LCA_0526 (Latilactobacillus sakei subsp. sakei (strain 23K) (Lactobacillus sakei subsp. sakei)).